The primary structure comprises 250 residues: rRNA methyltransferase 2, mitochondrial (250 aa).

Residues 1–35 (MRLVFTGNCVFKRLLHTEIGGKYAKQQPRNLKGRS) constitute a mitochondrion transit peptide. S-adenosyl-L-methionine-binding positions include 90 to 93 (PGSW), Asp119, 136 to 137 (DF), and Asp161. The active-site Proton acceptor is the Lys201.

This sequence belongs to the class I-like SAM-binding methyltransferase superfamily. RNA methyltransferase RlmE family.

The protein localises to the mitochondrion. It catalyses the reaction a uridine in rRNA + S-adenosyl-L-methionine = a 2'-O-methyluridine in rRNA + S-adenosyl-L-homocysteine + H(+). Its function is as follows. S-adenosyl-L-methionine-dependent 2'-O-ribose methyltransferase that catalyzes the formation of 2'-O-methyluridine at position 1579 (Um1579) in the mitochondrial large subunit ribosomal RNA (mtLSU rRNA), a universally conserved modification in the peptidyl transferase domain of the mtLSU rRNA. This activity may require prior 2'-O-methylguanosine modification at position 1580 (Gm1580) by MRM3. Essential for late-stage assembly of mtLSU required for efficient translation of mitochondrial DNA encoded proteins; methyltransferase activity is not required for this function. Essential for mitochondrial respiratory function. The sequence is that of rRNA methyltransferase 2, mitochondrial from Drosophila melanogaster (Fruit fly).